The sequence spans 388 residues: Alcohol dehydrogenase-like 1 (388 aa).

Zn(2+) contacts are provided by Cys53, Thr55, His76, Cys106, Cys109, Cys112, Cys120, and Cys185. Thr55 and His76 together coordinate an alcohol. Thr55 serves as a coordination point for NAD(+). NAD(+) is bound by residues 210–215 (GLGAVG), Asp234, Lys239, 304–306 (LGM), Phe331, and Arg381.

This sequence belongs to the zinc-containing alcohol dehydrogenase family. Class-III subfamily. In terms of assembly, homodimer. Zn(2+) is required as a cofactor.

It is found in the cytoplasm. It catalyses the reaction a primary alcohol + NAD(+) = an aldehyde + NADH + H(+). The enzyme catalyses a secondary alcohol + NAD(+) = a ketone + NADH + H(+). The sequence is that of Alcohol dehydrogenase-like 1 from Arabidopsis thaliana (Mouse-ear cress).